A 112-amino-acid chain; its full sequence is UPF0482 protein SG1468 (112 aa).

The signal sequence occupies residues M1–A22.

It belongs to the UPF0482 family.

The sequence is that of UPF0482 protein SG1468 from Sodalis glossinidius (strain morsitans).